The sequence spans 84 residues: MKTLLLTLVVVTIVCLDLGYTRKCLNTPLPLIYKTCPIGQDKCIKMTIKKLPSKYDVIRGCIDICPKSSADVEVLCCDTNKCNK.

Positions 1-21 (MKTLLLTLVVVTIVCLDLGYT) are cleaved as a signal peptide. 4 cysteine pairs are disulfide-bonded: Cys24/Cys43, Cys36/Cys61, Cys65/Cys76, and Cys77/Cys82.

Belongs to the three-finger toxin family. Short-chain subfamily. Aminergic toxin sub-subfamily. In terms of tissue distribution, expressed by the venom gland.

It is found in the secreted. In terms of biological role, acts as a beta-blocker by binding to beta-1 and beta-2 adrenergic receptors (ADRB1 and ADRB2). It dose-dependently decreases the heart rate (bradycardia), whereas conventional cardiotoxins increases it. At 100 mg/kg, intraperitoneal injection into mice provokes labored breathing, impaired locomotion, lack of response to external stimuli, and death (after 30 minutes). This chain is Beta-cardiotoxin CTX15, found in Ophiophagus hannah (King cobra).